Consider the following 1039-residue polypeptide: Translation initiation factor IF-2 (1039 aa).

2 disordered regions span residues 39–347 (TISE…KWQE) and 400–452 (ARPP…PEKV). The segment covering 103–125 (RNTTSNAPEASVANNQIASSEAN) has biased composition (polar residues). Residues 157–176 (PQKPAAPEAEPEAQSQAPAK) show a composition bias toward low complexity. Basic and acidic residues-rich tracts occupy residues 178–197 (AVEK…ERQP) and 226–243 (PILK…DQAK). Residues 408 to 423 (ARSASAATAAPISSPT) show a composition bias toward low complexity. The span at 432–451 (NNRDQNRRQETEVKRERPEK) shows a compositional bias: basic and acidic residues. The 174-residue stretch at 533–706 (RRPPVVTIMG…LLVAEVGELS (174 aa)) folds into the tr-type G domain. The segment at 542–549 (GHVDHGKT) is G1. A GTP-binding site is contributed by 542 to 549 (GHVDHGKT). The segment at 567–571 (GITQH) is G2. The tract at residues 592–595 (DTPG) is G3. GTP is bound by residues 592–596 (DTPGH) and 646–649 (NKID). The interval 646–649 (NKID) is G4. The G5 stretch occupies residues 682–684 (SAI).

It belongs to the TRAFAC class translation factor GTPase superfamily. Classic translation factor GTPase family. IF-2 subfamily.

Its subcellular location is the cytoplasm. Functionally, one of the essential components for the initiation of protein synthesis. Protects formylmethionyl-tRNA from spontaneous hydrolysis and promotes its binding to the 30S ribosomal subunits. Also involved in the hydrolysis of GTP during the formation of the 70S ribosomal complex. This is Translation initiation factor IF-2 from Nostoc sp. (strain PCC 7120 / SAG 25.82 / UTEX 2576).